The following is a 514-amino-acid chain: Na(+)/H(+) antiporter NhaB (514 aa).

The next 12 helical transmembrane spans lie at 23–43 (LALIAFLIANPLIFFINPFVA), 63–83 (PLLPGGLLAIEAVIIGMTSAA), 97–117 (LLLMFMVAGIYFMKQLLLFIF), 120–140 (LLLSIRSKMLLSLAFCMAAAF), 144–164 (FLDALTVVAVVISVAVGFYGI), 202–222 (LMMHAGVGTALGGVMTMVGEP), 238–258 (FFLRMSPVTVPVLICGLFTCV), 303–323 (AIIGVWLVTALALHLAEVGLI), 357–377 (LTVFFSIVAVIIDQHLFAPII), 391–411 (LFYLFNGLLSSISDNVFVGTI), 447–467 (ATPNGQAAFLFLLTSALAPLI), and 475–495 (VWMALPYTLVLTLVGLLCVEF).

It belongs to the NhaB Na(+)/H(+) (TC 2.A.34) antiporter family.

It is found in the cell inner membrane. It carries out the reaction 2 Na(+)(in) + 3 H(+)(out) = 2 Na(+)(out) + 3 H(+)(in). Na(+)/H(+) antiporter that extrudes sodium in exchange for external protons. The chain is Na(+)/H(+) antiporter NhaB from Citrobacter koseri (strain ATCC BAA-895 / CDC 4225-83 / SGSC4696).